Consider the following 738-residue polypeptide: Dipeptidyl peptidase 3 (738 aa).

The residue at position 2 (alanine 2) is an N-acetylalanine. Histidine 450 provides a ligand contact to Zn(2+). The active site involves glutamate 451. Histidine 455 and glutamate 508 together coordinate Zn(2+).

Belongs to the peptidase M49 family. The cofactor is Zn(2+).

It is found in the cytoplasm. Its subcellular location is the cytosol. It carries out the reaction Release of an N-terminal dipeptide from a peptide comprising four or more residues, with broad specificity. Also acts on dipeptidyl 2-naphthylamides.. Functionally, cleaves and degrades bioactive peptides, including angiotensin, Leu-enkephalin and Met-enkephalin. Also cleaves Arg-Arg-beta-naphthylamide (in vitro). The chain is Dipeptidyl peptidase 3 (Dpp3) from Mus musculus (Mouse).